The following is a 446-amino-acid chain: SWI/SNF chromatin-remodeling accessory subunit 1 (446 aa).

The segment at 1–53 (MQTQARPPVPQGPRFNHPATPQQVRRPINAPLPGQTAQIQGNRGPQPPKKKKR) is disordered. Residues 220–297 (YQPMKFKLHP…PQRLHQLLQQ (78 aa)) form the SWIB/MDM2 domain.

It belongs to the SMARCD family. As to quaternary structure, component of the multiprotein chromatin-remodeling complexes SWI/SNF: SWI/SNF-A (BAF), SWI/SNF-B (PBAF) and related complexes. The canonical complex contains a catalytic subunit swsn-4, core subunits swsn-1 and swsn-5, and accessory subunits swsn-3, swsn-6, phf-10, dpff-1, swsn-9 and either ham-3/swsn-2.1 or swsn-2.2. May interact with blmp-1. As to expression, broadly expressed in all cell types.

The protein resides in the nucleus. In terms of biological role, involved in transcriptional activation and repression of select genes by chromatin remodeling (alteration of DNA-nucleosome topology). Component of SWI/SNF chromatin remodeling complexes that carry out key enzymatic activities, changing chromatin structure by altering DNA-histone contacts within a nucleosome in an ATP-dependent manner. Required for the blmp-1-mediated transcriptional activation or repression of several hypodermal genes such as bed-3. Involved in regulating differentiation, migration and axon pathfinding of specific serotonergic neurons (HSNs). Probably regulates vulva development through the let-60/Ras pathway. May be involved in regulation of developmental processes in the embryo driven by the Wnt pathway. Involved in gonadogenesis. This Caenorhabditis elegans protein is SWI/SNF chromatin-remodeling accessory subunit 1.